The sequence spans 222 residues: Collectrin (222 aa).

Residues 1–14 (MLWLLFFLVTAIHA) form the signal peptide. Residues 15–141 (DLCRPDAENA…LAPPTDPSVP (127 aa)) lie on the Extracellular side of the membrane. Positions 21-222 (AENAFKVRLS…VTEDERLTPL (202 aa)) constitute a Collectrin-like domain. Asparagine 76 and asparagine 93 each carry an N-linked (GlcNAc...) asparagine glycan. A helical transmembrane segment spans residues 142–162 (IWIIIFGVIFCIVLVATMLLI). The Cytoplasmic segment spans residues 163 to 222 (ISGIRQHRRKNKGPSEMEDSEDKCENVITIENGIPCDPLDMKGGHINDAFVTEDERLTPL). Residues threonine 214 and threonine 220 each carry the phosphothreonine modification.

This sequence belongs to the CLTRN family. As to quaternary structure, monomer. Homodimer; dimerization prevents CLTRN cleavage by BACE2. Interacts with SLC6A18; this interaction regulates the trafficking of SLC6A18 to the cell membrane and its amino acid transporter activity. Interacts with SLC6A19; this interaction regulates the trafficking of SLC6A19 to the cell membrane and its amino acid transporter activity. Interacts with SNAPIN. In terms of processing, glycosylated. Glycosylation is required for plasma membrane localization and for its cleavage by BACE2. Proteolytically processed in pancreatic beta cells by BACE2 leading to the generation and extracellular release of soluble CLTRN, and a corresponding cell-associated C-terminal fragment which is later cleaved by gamma-secretase. This shedding process inactivates CLTRN. Three cleavage sites have been identified for BACE2, two clustered sites after Phe-116 and Leu-118 and a more membrane proximal site at Phe-125; the preferred BACE2 cleavage site seems to be between Phe-125 and Leu-126, Phe-116 and Leu-118 act as alternative sites.

Its subcellular location is the cell membrane. Functionally, plays an important role in amino acid transport by acting as binding partner of amino acid transporters SLC6A18 and SLC6A19, regulating their trafficking on the cell surface and their activity. May also play a role in trafficking of amino acid transporters SLC3A1 and SLC7A9 to the renal cortical cell membrane. Regulator of SNARE complex function. Stimulator of beta cell replication. The protein is Collectrin (CLTRN) of Bos taurus (Bovine).